We begin with the raw amino-acid sequence, 792 residues long: Kinesin-like protein KIF3C (792 aa).

One can recognise a Kinesin motor domain in the interval 10-363 (ALKVVARCRP…LRFANRAKNI (354 aa)). 97–104 (GQTGTGKT) lines the ATP pocket. Disordered regions lie at residues 249–287 (GSER…RPKE), 397–418 (MLGK…APAG), and 749–792 (RPST…LDHE). Low complexity predominate over residues 257 to 268 (GPNTTGGTATQP). A compositionally biased stretch (gly residues) spans 269–282 (TGGGGGGGGGGGGG). Positions 374–627 (KDTLLREFQE…QNEQTRELKL (254 aa)) form a coiled coil. Residues 397-412 (MLGKRLRRKSSRRKKA) show a composition bias toward basic residues. A globular region spans residues 628 to 792 (KYLIIENFIP…LRPTTVLDHE (165 aa)). The segment covering 773–792 (AHASLAASAALRPTTVLDHE) has biased composition (low complexity).

Belongs to the TRAFAC class myosin-kinesin ATPase superfamily. Kinesin family. Kinesin II subfamily. Heterodimer of KIF3A and KIF3C.

The protein localises to the cytoplasm. The protein resides in the cytoskeleton. In terms of biological role, microtubule-based anterograde translocator for membranous organelles. This Bos taurus (Bovine) protein is Kinesin-like protein KIF3C (KIF3C).